A 748-amino-acid chain; its full sequence is Phosphoenolpyruvate-dependent phosphotransferase system (748 aa).

The 127-residue stretch at 1–127 folds into the GAF domain; the sequence is MLTRLREIVE…RRQLLGVLVV (127 aa). Residues 128 to 170 are linker; the sequence is QQRELRQYDESEESFLVTLATQMAAILSQSQVTALFGQYRQTR. Residues 171-748 are PTS EI; sequence IRALPAAPGV…GMGGLIRGGL (578 aa). His356 serves as the catalytic Tele-phosphohistidine intermediate. Residues Arg462 and Arg498 each contribute to the phosphoenolpyruvate site. Glu597 and Asp621 together coordinate Mg(2+). Phosphoenolpyruvate is bound by residues 620–621 and Arg631; that span reads ND. Cys668 functions as the Proton donor in the catalytic mechanism.

Belongs to the PEP-utilizing enzyme family. Requires Mg(2+) as cofactor.

It localises to the cytoplasm. The enzyme catalyses L-histidyl-[protein] + phosphoenolpyruvate = N(pros)-phospho-L-histidyl-[protein] + pyruvate. Its function is as follows. Component of the phosphoenolpyruvate-dependent nitrogen-metabolic phosphotransferase system (nitrogen-metabolic PTS), that seems to be involved in regulating nitrogen metabolism. Enzyme I-Ntr transfers the phosphoryl group from phosphoenolpyruvate (PEP) to the phosphoryl carrier protein (NPr). Could function in the transcriptional regulation of sigma-54 dependent operons in conjunction with the NPr (PtsO) and EIIA-Ntr (PtsN) proteins. Enzyme I-Ntr is specific for NPr. This Salmonella typhimurium (strain LT2 / SGSC1412 / ATCC 700720) protein is Phosphoenolpyruvate-dependent phosphotransferase system (ptsP).